Consider the following 199-residue polypeptide: ATP-dependent Clp protease proteolytic subunit (199 aa).

The Nucleophile role is filled by Ser98. Residue His123 is part of the active site.

It belongs to the peptidase S14 family. Fourteen ClpP subunits assemble into 2 heptameric rings which stack back to back to give a disk-like structure with a central cavity, resembling the structure of eukaryotic proteasomes.

The protein resides in the cytoplasm. It catalyses the reaction Hydrolysis of proteins to small peptides in the presence of ATP and magnesium. alpha-casein is the usual test substrate. In the absence of ATP, only oligopeptides shorter than five residues are hydrolyzed (such as succinyl-Leu-Tyr-|-NHMec, and Leu-Tyr-Leu-|-Tyr-Trp, in which cleavage of the -Tyr-|-Leu- and -Tyr-|-Trp bonds also occurs).. In terms of biological role, cleaves peptides in various proteins in a process that requires ATP hydrolysis. Has a chymotrypsin-like activity. Plays a major role in the degradation of misfolded proteins. The sequence is that of ATP-dependent Clp protease proteolytic subunit from Ehrlichia chaffeensis (strain ATCC CRL-10679 / Arkansas).